We begin with the raw amino-acid sequence, 408 residues long: Phosphoenolpyruvate/phosphate translocator 1, chloroplastic (408 aa).

The transit peptide at 1–85 (MQSSAVFSLS…SLDTNRFRTA (85 aa)) directs the protein to the chloroplast. At A86 the chain carries N-acetylalanine. Helical transmembrane passes span 105–125 (VLEL…FNIY), 137–157 (MTVT…MWVL), 165–185 (ISGA…LGNL), 198–218 (FTHT…AMFL), 222–242 (PTPW…LASI), 283–303 (ITLF…VTFF), 324–346 (IYTK…YMIL), and 377–396 (VSPV…FLYS). The 118-residue stretch at 124 to 241 (IYNKQVLKAL…PIVGGVALAS (118 aa)) folds into the EamA domain.

It belongs to the TPT transporter family. PPT (TC 2.A.7.9) subfamily. In terms of tissue distribution, expressed in root columella, lateral root cap and root vasculature tissue. In leaves, highly expressed in xylem parenchyma cells. In flowers, expressed in sepals, petals, filaments of the stamens, anthers and stigma.

It is found in the plastid. It localises to the chloroplast membrane. In terms of biological role, phosphoenolpyruvate/phosphate translocator that transports phosphoenolpyruvate (PEP), 2-phosphoglycerate, 3-phosphoglycerate and dihydroxyacetone phosphate. Imports PEP to the chloroplast stroma as one substrate of the shikimate pathway, from which aromatic amino acids and a variety of secondary products derive. Required for correct leaf mesophyll cell development and expression of chlorophyll a/b binding protein 3 (CAB3). This is Phosphoenolpyruvate/phosphate translocator 1, chloroplastic (PPT1) from Arabidopsis thaliana (Mouse-ear cress).